Consider the following 233-residue polypeptide: Glucosamine-6-phosphate deaminase (233 aa).

D62 acts as the Proton acceptor; for enolization step in catalysis. N128 serves as the catalytic For ring-opening step. H130 functions as the Proton acceptor; for ring-opening step in the catalytic mechanism. Catalysis depends on E135, which acts as the For ring-opening step.

The protein belongs to the glucosamine/galactosamine-6-phosphate isomerase family. NagB subfamily.

It carries out the reaction alpha-D-glucosamine 6-phosphate + H2O = beta-D-fructose 6-phosphate + NH4(+). The protein operates within amino-sugar metabolism; N-acetylneuraminate degradation; D-fructose 6-phosphate from N-acetylneuraminate: step 5/5. Its function is as follows. Catalyzes the reversible isomerization-deamination of glucosamine 6-phosphate (GlcN6P) to form fructose 6-phosphate (Fru6P) and ammonium ion. The chain is Glucosamine-6-phosphate deaminase from Streptococcus agalactiae serotype Ia (strain ATCC 27591 / A909 / CDC SS700).